Consider the following 546-residue polypeptide: CTP synthase (546 aa).

Positions 1-269 (MNSNTKIIFV…DAKLVELLNL (269 aa)) are amidoligase domain. Position 16 (serine 16) interacts with CTP. UTP is bound at residue serine 16. Residues 17-22 (SLGKGV) and aspartate 74 each bind ATP. The Mg(2+) site is built by aspartate 74 and glutamate 143. Residues 150–152 (DIE), 190–195 (KTKPTQ), and lysine 226 each bind CTP. UTP is bound by residues 190–195 (KTKPTQ) and lysine 226. In terms of domain architecture, Glutamine amidotransferase type-1 spans 294-546 (IIAMVGKYVS…IQAAIENSNN (253 aa)). Glycine 356 serves as a coordination point for L-glutamine. The active-site Nucleophile; for glutamine hydrolysis is cysteine 383. L-glutamine-binding positions include 384 to 387 (LGMQ), glutamate 407, and arginine 474. Residues histidine 519 and glutamate 521 contribute to the active site.

This sequence belongs to the CTP synthase family. As to quaternary structure, homotetramer.

The catalysed reaction is UTP + L-glutamine + ATP + H2O = CTP + L-glutamate + ADP + phosphate + 2 H(+). The enzyme catalyses L-glutamine + H2O = L-glutamate + NH4(+). It catalyses the reaction UTP + NH4(+) + ATP = CTP + ADP + phosphate + 2 H(+). It participates in pyrimidine metabolism; CTP biosynthesis via de novo pathway; CTP from UDP: step 2/2. Allosterically activated by GTP, when glutamine is the substrate; GTP has no effect on the reaction when ammonia is the substrate. The allosteric effector GTP functions by stabilizing the protein conformation that binds the tetrahedral intermediate(s) formed during glutamine hydrolysis. Inhibited by the product CTP, via allosteric rather than competitive inhibition. In terms of biological role, catalyzes the ATP-dependent amination of UTP to CTP with either L-glutamine or ammonia as the source of nitrogen. Regulates intracellular CTP levels through interactions with the four ribonucleotide triphosphates. This is CTP synthase from Francisella tularensis subsp. holarctica (strain FTNF002-00 / FTA).